We begin with the raw amino-acid sequence, 574 residues long: Kelch-like protein 18 (574 aa).

The 40-residue stretch at 66–105 folds into the BTB domain; sequence MFTNDMMECKQDEIVMQGMDPSALEALINFAYNGNLAIDQ. A BACK domain is found at 140-242; sequence CLGVRQFAET…RPQFLSDRVQ (103 aa). Kelch repeat units lie at residues 289–336, 337–383, 384–430, 432–477, 479–524, and 525–571; these read LIYA…VVNG, LLYA…VLDG, QIYV…VFEG, IYVS…SLGS, MFVC…ASCG, and RLYA…CIPL.

In terms of assembly, interacts with AURKA. Interacts (via BTB domain) with CUL3. Interacts (via kelch repeats) with UNC119.

Its pathway is protein modification; protein ubiquitination. Its function is as follows. Substrate-specific adapter of a BCR (BTB-CUL3-RBX1) E3 ubiquitin-protein ligase complex required for mitotic progression and cytokinesis. The BCR(KLHL18) E3 ubiquitin ligase complex mediates the ubiquitination of AURKA leading to its activation at the centrosome which is required for initiating mitotic entry. Regulates light-and dark-dependent alpha-transducin localization changes in rod photoreceptors through UNC119 ubiquitination and degradation. Preferentially ubiquitinates the unphosphorylated form of UNC119 over the phosphorylated form. In the presence of UNC119, under dark-adapted conditions alpha-transducin mislocalizes from the outer segment to the inner part of rod photoreceptors which leads to decreased photoreceptor damage caused by light. This is Kelch-like protein 18 (KLHL18) from Homo sapiens (Human).